Consider the following 283-residue polypeptide: Bifunctional protein FolD (283 aa).

Residues 165–167 (GRG), threonine 192, and valine 233 each bind NADP(+).

It belongs to the tetrahydrofolate dehydrogenase/cyclohydrolase family. As to quaternary structure, homodimer.

The catalysed reaction is (6R)-5,10-methylene-5,6,7,8-tetrahydrofolate + NADP(+) = (6R)-5,10-methenyltetrahydrofolate + NADPH. It catalyses the reaction (6R)-5,10-methenyltetrahydrofolate + H2O = (6R)-10-formyltetrahydrofolate + H(+). It participates in one-carbon metabolism; tetrahydrofolate interconversion. Its function is as follows. Catalyzes the oxidation of 5,10-methylenetetrahydrofolate to 5,10-methenyltetrahydrofolate and then the hydrolysis of 5,10-methenyltetrahydrofolate to 10-formyltetrahydrofolate. In Thermobifida fusca (strain YX), this protein is Bifunctional protein FolD.